Here is a 402-residue protein sequence, read N- to C-terminus: Arginine biosynthesis bifunctional protein ArgJ (402 aa).

Substrate is bound by residues T152, K178, T189, E275, N397, and T402. The Nucleophile role is filled by T189.

It belongs to the ArgJ family. As to quaternary structure, heterotetramer of two alpha and two beta chains.

It localises to the cytoplasm. The catalysed reaction is N(2)-acetyl-L-ornithine + L-glutamate = N-acetyl-L-glutamate + L-ornithine. It carries out the reaction L-glutamate + acetyl-CoA = N-acetyl-L-glutamate + CoA + H(+). Its pathway is amino-acid biosynthesis; L-arginine biosynthesis; L-ornithine and N-acetyl-L-glutamate from L-glutamate and N(2)-acetyl-L-ornithine (cyclic): step 1/1. The protein operates within amino-acid biosynthesis; L-arginine biosynthesis; N(2)-acetyl-L-ornithine from L-glutamate: step 1/4. In terms of biological role, catalyzes two activities which are involved in the cyclic version of arginine biosynthesis: the synthesis of N-acetylglutamate from glutamate and acetyl-CoA as the acetyl donor, and of ornithine by transacetylation between N(2)-acetylornithine and glutamate. The protein is Arginine biosynthesis bifunctional protein ArgJ of Symbiobacterium thermophilum (strain DSM 24528 / JCM 14929 / IAM 14863 / T).